The sequence spans 478 residues: Spindle defective protein 3 (478 aa).

Over 1–24 the chain is Cytoplasmic; sequence MDQMTVEEKILEHQELEDGSSSFR. A helical transmembrane segment spans residues 25–45; sequence WLVSSTVIAIGGATVALYISG. The Extracellular portion of the chain corresponds to 46–52; the sequence is KIDWKIP. The helical transmembrane segment at 53–73 threads the bilayer; sequence AIEAGLALTAGGTITCGYLWF. Topologically, residues 74-478 are cytoplasmic; sequence KKRVKTVRKL…LRRVDDDIIE (405 aa).

It localises to the mitochondrion. The protein localises to the mitochondrion outer membrane. In terms of biological role, in the first mitotic division in embryos, required for mitotic spindle alignment and asymmetric cell division. Required for motor-driven chromosome movement and homolog searching within the nucleus, and subsequently ensures homologous chromosome pairing during the prophase stage of meiosis. This chain is Spindle defective protein 3, found in Caenorhabditis elegans.